Reading from the N-terminus, the 205-residue chain is Adenylyl-sulfate kinase (205 aa).

Gly-35–Ser-42 contributes to the ATP binding site. The Phosphoserine intermediate role is filled by Ser-109.

It belongs to the APS kinase family.

The catalysed reaction is adenosine 5'-phosphosulfate + ATP = 3'-phosphoadenylyl sulfate + ADP + H(+). It functions in the pathway sulfur metabolism; hydrogen sulfide biosynthesis; sulfite from sulfate: step 2/3. Functionally, catalyzes the synthesis of activated sulfate. The protein is Adenylyl-sulfate kinase of Acaryochloris marina (strain MBIC 11017).